A 337-amino-acid chain; its full sequence is MIQKNWQELIKPNKVDFITHGSRTHATVVAEPLERGFGLTLGNALRRVLLSSLRGAAVTAVQIDGVLHEFSSIPGVREDVTDIVLNIKEIAIRMEGEGPKRMVVRKEGPGVVTAGDIQTVGDVEILNPEHVICTLDEGAEIRMEFTVNTGKGYVPADRNRAEDAPIGLIPVDSLYSPVRKVSYKIENTREGQVLDYDKLTLNIETNGSVTGEDAVAYAARILQDQLSIFVNFEEPQKEAPQEQVAELAFNPALLKKVDELELSVRSANCLKNDNIVYIGDLIQKTEAEMLRTPNFGRKSLNEIKEVLASMGLHLGMEIPAWPPENIEDLAKRYEDQY.

Residues 1-233 (MIQKNWQELI…DQLSIFVNFE (233 aa)) form an alpha N-terminal domain (alpha-NTD) region. Residues 249–337 (FNPALLKKVD…DLAKRYEDQY (89 aa)) are alpha C-terminal domain (alpha-CTD).

It belongs to the RNA polymerase alpha chain family. Homodimer. The RNAP catalytic core consists of 2 alpha, 1 beta, 1 beta' and 1 omega subunit. When a sigma factor is associated with the core the holoenzyme is formed, which can initiate transcription.

It catalyses the reaction RNA(n) + a ribonucleoside 5'-triphosphate = RNA(n+1) + diphosphate. Functionally, DNA-dependent RNA polymerase catalyzes the transcription of DNA into RNA using the four ribonucleoside triphosphates as substrates. This Brucella abortus (strain S19) protein is DNA-directed RNA polymerase subunit alpha.